A 587-amino-acid polypeptide reads, in one-letter code: GATA zinc finger domain-containing protein 3 (587 aa).

A compositionally biased stretch (low complexity) spans 53-74 (NINNNINNNNNNNNNNNNNNIN). 3 disordered regions span residues 53–141 (NINN…LKIP), 179–294 (QLAH…SSPS), and 312–392 (QTSP…ATIN). Polar residues predominate over residues 75-86 (QYHQNHYDQYSD). Composition is skewed to low complexity over residues 87–136 (NNCN…NNNN), 183–202 (NSSMPNSPTSSNISPSTPTS), 237–264 (NINGNHHNNNNNINNNINNNVNNNINNG), 272–292 (GNNNNNNNIGVNGSGSSNSSS), and 316–333 (SQQSQQQQQQQQQQQQSQ). Polar residues-rich tracts occupy residues 340–358 (INTTEIHQRSNPSSATNSP) and 365–379 (NESSVENSPFTTPLS). The GATA-type zinc finger occupies 500-525 (CIFCGTMETPEWRKGPGGHKTLCNAC). The segment at 536-587 (ENQNNGGSPNPQQNNVTTTTTTTTSTSTNSPNSNGNNFSPESAMSVSKLISD) is disordered. Over residues 538 to 575 (QNNGGSPNPQQNNVTTTTTTTTSTSTNSPNSNGNNFSP) the composition is skewed to low complexity. Polar residues predominate over residues 577-587 (SAMSVSKLISD).

The protein is GATA zinc finger domain-containing protein 3 (gtaC) of Dictyostelium discoideum (Social amoeba).